Here is a 185-residue protein sequence, read N- to C-terminus: Ribonuclease M5 (185 aa).

The 84-residue stretch at 4 to 87 (KEIIVVEGKD…AFLPKEEALA (84 aa)) folds into the Toprim domain. Glutamate 10, aspartate 56, and aspartate 58 together coordinate Mg(2+).

Belongs to the ribonuclease M5 family. It depends on Mg(2+) as a cofactor.

Its subcellular location is the cytoplasm. It catalyses the reaction Endonucleolytic cleavage of RNA, removing 21 and 42 nucleotides, respectively, from the 5'- and 3'-termini of a 5S-rRNA precursor.. Functionally, required for correct processing of both the 5' and 3' ends of 5S rRNA precursor. Cleaves both sides of a double-stranded region yielding mature 5S rRNA in one step. The polypeptide is Ribonuclease M5 (Bacillus anthracis).